The following is a 309-amino-acid chain: Heme-dependent oxidative N-demethylase beta subunit (309 aa).

The region spanning 2-103 is the FAD-binding FR-type domain; it reads STLLDVRVAA…SPPANLFPLH (102 aa). Residues 226-309 form the 2Fe-2S ferredoxin-type domain; the sequence is FRVELARSGQ…GCGSPILLDL (84 aa). Positions 260, 265, 268, and 296 each coordinate [2Fe-2S] cluster.

Belongs to the PDR/VanB family. As to quaternary structure, the heme-dependent oxidative N-demethylase (HODM) is a heterotetramer composed of a catalytic alpha subunit, a FMN/2Fe-2S-dependent oxidoreductase beta subunit, a gamma subunit with putative aminotransferase activity, and a delta subunit of unknown function. The cofactor is [2Fe-2S] cluster. Requires FMN as cofactor.

In terms of biological role, component of the heme-dependent oxidative N-demethylase (HODM) enzyme, that catalyzes the NADPH-dependent oxidation of dimethylamine (DMA) to methylamine (MA) and formaldehyde. Functions in bacterial methylated amine catabolism, linking alkylamine oxidation to the tetrahydrofolate C1 pool. The beta subunit of HODM binds FMN and a 2Fe-2S cluster, and likely reduces the ferric heme iron of the alpha subunit to ferrous using NADPH. This is Heme-dependent oxidative N-demethylase beta subunit from Ectopseudomonas mendocina (strain ymp) (Pseudomonas mendocina).